A 141-amino-acid polypeptide reads, in one-letter code: Hemoglobin subunit alpha (141 aa).

The region spanning 1-141 is the Globin domain; the sequence is VLSPADKTNV…VSTVLTSKYR (141 aa). The residue at position 3 (serine 3) is a Phosphoserine. An N6-succinyllysine modification is found at lysine 7. Threonine 8 is subject to Phosphothreonine. At lysine 11 the chain carries N6-succinyllysine. Position 16 is an N6-acetyllysine; alternate (lysine 16). Lysine 16 bears the N6-succinyllysine; alternate mark. Position 24 is a phosphotyrosine (tyrosine 24). Serine 35 is modified (phosphoserine). Lysine 40 is subject to N6-succinyllysine. A Phosphoserine modification is found at serine 49. An O2-binding site is contributed by histidine 58. Residue histidine 87 participates in heme b binding. Position 102 is a phosphoserine (serine 102). Threonine 108 carries the post-translational modification Phosphothreonine. Phosphoserine is present on serine 124. Residues threonine 134 and threonine 137 each carry the phosphothreonine modification. At serine 138 the chain carries Phosphoserine.

It belongs to the globin family. In terms of assembly, heterotetramer of two alpha chains and two beta chains. In terms of tissue distribution, red blood cells.

Functionally, involved in oxygen transport from the lung to the various peripheral tissues. In terms of biological role, hemopressin acts as an antagonist peptide of the cannabinoid receptor CNR1. Hemopressin-binding efficiently blocks cannabinoid receptor CNR1 and subsequent signaling. The sequence is that of Hemoglobin subunit alpha (HBA) from Pteronura brasiliensis (Giant otter).